Reading from the N-terminus, the 448-residue chain is Beclin-1 (448 aa).

Met-1 is modified (N-acetylmethionine). Phosphoserine is present on residues Ser-14 and Ser-29. The segment at 47–66 is disordered; that stretch reads TTAQAKPGETQEEEANSGEE. 3 positions are modified to phosphoserine; by AMPK: Ser-88, Ser-91, and Ser-94. The BH3 signature appears at 106-125; it reads TMENLSRRLKVTGDLFDIMS. The interval 110 to 157 is interaction with BCL2 and BCL2L1 isoform Bcl-X(L); it reads LSRRLKVTGDLFDIMSGQTDVDHPLCEECTDTLLDQLDTQLNVTENEC. Thr-117 is subject to Phosphothreonine; by DAPK1. Positions 140 to 268 form a coiled coil; that stretch reads DTLLDQLDTQ…LDKLKKTNVF (129 aa). Positions 243–448 are evolutionary conserved domain (ECD); that stretch reads DELKSVENQV…AWVSSQFYNK (206 aa). Glycyl lysine isopeptide (Lys-Gly) (interchain with G-Cter in ubiquitin) cross-links involve residues Lys-400 and Lys-435. The tract at residues 423-448 is required for membrane-association; it reads WTKALKFMLTNLKWGLAWVSSQFYNK.

It belongs to the beclin family. In terms of assembly, a homodimeric form is proposed to exist; this metastable form readily transits to ATG14- or UVRAG-containing complexes with BECN1:UVRAG being more stable than BECN1:ATG14. Component of the PI3K (PI3KC3/PI3K-III/class III phosphatidylinositol 3-kinase) complex whose core is composed of the catalytic subunit PIK3C3, the regulatory subunit PIK3R4 and BECN1, and associates with additional regulatory/auxiliary subunits to form alternative complex forms. Accepted alternative complex forms containing a fourth regulatory subunit in a mutually exclusive manner are PI3K complex I (PI3KC3-C1) containing ATG14, and PI3K complex II (PI3KC3-C2) containing UVRAG. PI3KC3-C1 displays a V-shaped architecture with PIK3R4 serving as a bridge between PIK3C3 and the ATG14:BECN1 subcomplex. Both, PI3KC3-C1 and PI3KC3-C2, can associate with further regulatory subunits, such as RUBCN, SH3GLB1/Bif-1 and AMBRA1. PI3KC3-C1 probably associates with PIK3CB. Forms a complex with PPP2CA and AMBRA1; AMBRA1 and BECN1 components of the complex regulate MYC stability via different pathways. Component of the complex, at least composed of LRPPRC, BECN1 and BCL2; the interactions prevent BECN1 from forming an autophagy-inducing complex with PIK3C3. Interacts with AMBRA1, GOPC, GRID2 and PIK3CB. Interacts with BCL2 and BCL2L1 isoform Bcl-X(L); the interaction inhibits BECN1 function in promoting autophagy by interfering with the formation of the PI3K complex. Interacts with cytosolic HMGB1; inhibits the interaction of BECN1 and BCL2 leading to promotion of autophagy. Interacts with USP10, USP13, VMP1, DAPK1. Interacts with the poly-Gln domain of ATXN3; the interaction causes deubiquitination at Lys-400 and stabilizes BECN1. Interacts with SLAMF1. Interacts with TRIM5; the interaction causes activation of BECN1 by causing its dissociation from its inhibitors BCL2 and TAB2. Interacts with active ULK1 (phosphorylated on 'Ser-317') and MEFV simultaneously. Interacts with TRIM50. Interacts with TRIM16. Interacts with WDR81 and WDR91; negatively regulates the PI3 kinase/PI3K activity associated with endosomal membranes. Interacts with LAPTM4B; competes with EGFR for LAPTM4B binding; regulates EGFR activity. Interacts with ATG14; this interaction is increased in the absence of TMEM39A. Interacts with WASHC1; preventing interaction with AMBRA1 and the DCX(AMBRA1) complex and subsequent ubiquitination. Interacts with TRIM17. Interacts with BCL2L10/BCL-B (via BH1 domain). Interacts with SH3BGRL. Interacts with Irgm1; enhancing BECN1-interacting partners and influencing the composition of the BECN1 complex. Interacts with ARMC3. Interacts with LRPPRC. As to quaternary structure, (Microbial infection) Interacts with murine gammaherpesvirus 68 M11; the viral protein binds BECN1 with higher affinity than cellular BCL2. In terms of processing, phosphorylation at Thr-117 by DAPK1 reduces its interaction with BCL2 and BCL2L1 and promotes induction of autophagy. In response to autophagic stimuli, phosphorylated at serine residues by AMPK in an ATG14-dependent manner, and this phosphorylation is critical for maximally efficient autophagy. Polyubiquitinated by NEDD4, both with 'Lys-11'- and 'Lys-63'-linkages. 'Lys-11'-linked polyubiquitination leads to degradation and is enhanced when the stabilizing interaction partner VPS34 is depleted. Deubiquitinated by USP10 and USP13, leading to stabilize the PIK3C3/VPS34-containing complexes. Polyubiquitinated at Lys-400 with 'Lys-48'-linkages. 'Lys-48'-linked poyubiquitination of Lys-400 leads to degradation. Deubiquitinated by ATXN3, leading to stabilization. Ubiquitinated at Lys-435 via 'Lys-63'-linkage by the DCX(AMBRA1) complex, thereby increasing the association between BECN1 and PIK3C3 to promote PIK3C3 activity. 'Lys-48'-linked ubiquitination by RNF216 leads to proteasomal degradation and autophagy inhibition. Post-translationally, proteolytically processed by caspases including CASP8 and CASP3; the C-terminal fragments lack autophagy-inducing capacity and are proposed to induce apoptosis. Thus the cleavage is proposed to be an determinant to switch from autophagy to apoptosis pathways affecting cellular homeostasis including viral infections and survival of tumor cells.

It localises to the cytoplasm. The protein localises to the golgi apparatus. The protein resides in the trans-Golgi network membrane. It is found in the endosome membrane. Its subcellular location is the endoplasmic reticulum membrane. It localises to the mitochondrion membrane. The protein localises to the endosome. The protein resides in the cytoplasmic vesicle. It is found in the autophagosome. Its subcellular location is the mitochondrion. It localises to the nucleus. Its function is as follows. Plays a central role in autophagy. Acts as a core subunit of different PI3K complex forms that mediate formation of phosphatidylinositol 3-phosphate and are believed to play a role in multiple membrane trafficking pathways: PI3KC3-C1 is involved in initiation of autophagosomes and PI3KC3-C2 in maturation of autophagosomes and endocytosis. Involved in regulation of degradative endocytic trafficking and required for the abscission step in cytokinesis, probably in the context of PI3KC3-C2. Essential for the formation of PI3KC3-C2 but not PI3KC3-C1 PI3K complex forms. Involved in endocytosis including endosome formation in neuronal cells. May play a role in antiviral host defense. In terms of biological role, beclin-1-C 35 kDa localized to mitochondria can promote apoptosis; it induces the mitochondrial translocation of BAX and the release of proapoptotic factors. In Mus musculus (Mouse), this protein is Beclin-1 (Becn1).